The primary structure comprises 225 residues: RNA-binding protein 24-A (225 aa).

An RRM domain is found at 11-88 (TKIFVGGLPY…RKANVNLAYL (78 aa)).

Its subcellular location is the nucleus. The protein resides in the cytoplasm. Functionally, multifunctional RNA-binding protein involved in the regulation of pre-mRNA splicing, mRNA stability and mRNA translation important for cell fate decision and differentiation. Plays a major role in pre-mRNA alternative splicing regulation. Mediates preferentially muscle-specific exon inclusion in numerous mRNAs important for striated cardiac and skeletal muscle cell differentiation. Binds to intronic splicing enhancer (ISE) composed of stretches of GU-rich motifs localized in flanking intron of exon that will be included by alternative splicing. Involved in embryonic stem cell (ESC) transition to cardiac cell differentiation by promoting pre-mRNA alternative splicing events of several pluripotency and/or differentiation genes. Plays a role in the regulation of mRNA stability and mRNA translation to which it is bound. Involved in myogenic differentiation by regulating myog levels. Binds to a huge amount of mRNAs. Required for embryonic heart development, sarcomer and M-band formation in striated muscles. The polypeptide is RNA-binding protein 24-A (rbm24-a) (Xenopus laevis (African clawed frog)).